The following is an 876-amino-acid chain: Alanine--tRNA ligase (876 aa).

Positions 565, 569, 667, and 671 each coordinate Zn(2+).

Belongs to the class-II aminoacyl-tRNA synthetase family. The cofactor is Zn(2+).

It is found in the cytoplasm. The catalysed reaction is tRNA(Ala) + L-alanine + ATP = L-alanyl-tRNA(Ala) + AMP + diphosphate. Functionally, catalyzes the attachment of alanine to tRNA(Ala) in a two-step reaction: alanine is first activated by ATP to form Ala-AMP and then transferred to the acceptor end of tRNA(Ala). Also edits incorrectly charged Ser-tRNA(Ala) and Gly-tRNA(Ala) via its editing domain. The protein is Alanine--tRNA ligase of Staphylococcus aureus (strain MRSA252).